The chain runs to 393 residues: Bifunctional enzyme Fae/Hps (393 aa).

The interval Met-1–Val-161 is formaldehyde-activating enzyme. His-17 (proton donor) is an active-site residue. Residues Asp-19, Leu-48, Lys-66, Thr-68, and Gln-83 each coordinate substrate. The interval Met-162–Phe-393 is 3-hexulose-6-phosphate synthase.

In the N-terminal section; belongs to the formaldehyde-activating enzyme family. The protein in the C-terminal section; belongs to the HPS/KGPDC family. HPS subfamily.

It carries out the reaction 5,6,7,8-tetrahydromethanopterin + formaldehyde = 5,10-methylenetetrahydromethanopterin + H2O. The catalysed reaction is D-ribulose 5-phosphate + formaldehyde = D-arabino-hex-3-ulose 6-phosphate. The protein operates within carbohydrate biosynthesis; D-ribose 5-phosphate biosynthesis. In terms of biological role, catalyzes the condensation of formaldehyde with tetrahydromethanopterin (H(4)MPT) to 5,10-methylenetetrahydromethanopterin. Functionally, catalyzes the reversible formation of ribulose-5-phosphate and formaldehyde from 3-hexulose-6-phosphate. The polypeptide is Bifunctional enzyme Fae/Hps (Methanosphaerula palustris (strain ATCC BAA-1556 / DSM 19958 / E1-9c)).